Reading from the N-terminus, the 354-residue chain is Sorbitol dehydrogenase (354 aa).

C43 is a binding site for Zn(2+). Y49 serves as a coordination point for substrate. 2 residues coordinate Zn(2+): H67 and E68. E153 is a binding site for substrate. NAD(+)-binding residues include I181, D201, and R206. Residues S208 and S222 each carry the phosphoserine modification. Residues 270–272 (VGL) and 294–296 (VFR) each bind NAD(+). Residues R296 and Y297 each contribute to the substrate site.

It belongs to the zinc-containing alcohol dehydrogenase family. As to quaternary structure, homotetramer. The cofactor is Zn(2+). As to expression, expressed in liver.

It is found in the mitochondrion membrane. The protein localises to the cell projection. The protein resides in the cilium. Its subcellular location is the flagellum. The enzyme catalyses xylitol + NAD(+) = D-xylulose + NADH + H(+). It carries out the reaction L-iditol + NAD(+) = keto-L-sorbose + NADH + H(+). The catalysed reaction is keto-D-fructose + NADH + H(+) = D-sorbitol + NAD(+). Its function is as follows. Polyol dehydrogenase that catalyzes the reversible NAD(+)-dependent oxidation of various sugar alcohols. Is mostly active with xylitol, L-iditol and D-sorbitol (D-glucitol) as substrates, leading to the C2-oxidized products D-xylulose, L-sorbose and D-fructose, respectively. Is a key enzyme in the polyol pathway that interconverts glucose and fructose via sorbitol, which constitutes an important alternate route for glucose metabolism. May play a role in sperm motility by using sorbitol as an alternative energy source for sperm motility. In Ovis aries (Sheep), this protein is Sorbitol dehydrogenase (SORD).